A 270-amino-acid polypeptide reads, in one-letter code: MAKKDGNQEEEISQMEEGNIHSASNSDSNVGFCSSVSVVVILQKLIAEAIGTYFVIFAGCGSVAVNKIYGSVTFPGICVTWGLIVMVMVYTVGYISGAHFNPAVTITFSIFGRFPWKQVPLYIIAQLMGSILASGTLALLFDVTPQAYFGTVPVGSNGQSLAIEIIISFLLMFVISGVATDDRAIGQVAGIAVGMTITLNVFVAGPISGASMNPARSIGPAIVKHVYTGLWVYVVGPIIGTLAGAFVYNLIRSTDKPLRELAKSASSLRS.

2 helical membrane-spanning segments follow: residues 45–65 and 72–92; these read LIAE…SVAV and VTFP…VYTV. The NPA 1 motif lies at 101-103; it reads NPA. 3 consecutive transmembrane segments (helical) span residues 121-141, 160-180, and 188-208; these read LYII…ALLF, SLAI…GVAT, and VAGI…GPIS. The NPA 2 signature appears at 213–215; that stretch reads NPA. A helical membrane pass occupies residues 231–251; the sequence is WVYVVGPIIGTLAGAFVYNLI.

Belongs to the MIP/aquaporin (TC 1.A.8) family. NIP (TC 1.A.8.12) subfamily. In terms of tissue distribution, pollen specific.

The protein resides in the membrane. Its function is as follows. Aquaporins facilitate the transport of water and small neutral solutes across cell membranes. The sequence is that of Probable aquaporin NIP-type from Nicotiana alata (Winged tobacco).